The following is a 735-amino-acid chain: Photosystem I P700 chlorophyll a apoprotein A2 (735 aa).

A run of 8 helical transmembrane segments spans residues 46-69 (IFAS…FYVS), 135-158 (LSTA…IHGY), 176-200 (LNHH…HVAI), 274-292 (IAHH…GHMY), 329-352 (LNLQ…QHMY), 368-394 (AALY…IFLV), 416-438 (VIIS…LYVH), and 521-539 (FLVH…LILV). [4Fe-4S] cluster is bound by residues cysteine 563 and cysteine 572. Transmembrane regions (helical) follow at residues 579-600 (AFYL…YWHW) and 647-669 (LSVW…MFLI). Chlorophyll a is bound by residues histidine 658, methionine 666, and tyrosine 674. Position 675 (tryptophan 675) interacts with phylloquinone. A helical membrane pass occupies residues 708-728 (FVGLIHFTVGYILTYAAFLIA).

It belongs to the PsaA/PsaB family. The PsaA/B heterodimer binds the P700 chlorophyll special pair and subsequent electron acceptors. PSI consists of a core antenna complex that captures photons, and an electron transfer chain that converts photonic excitation into a charge separation. The eukaryotic PSI reaction center is composed of at least 11 subunits. P700 is a chlorophyll a/chlorophyll a' dimer, A0 is one or more chlorophyll a, A1 is one or both phylloquinones and FX is a shared 4Fe-4S iron-sulfur center. is required as a cofactor.

It is found in the plastid. Its subcellular location is the chloroplast thylakoid membrane. It catalyses the reaction reduced [plastocyanin] + hnu + oxidized [2Fe-2S]-[ferredoxin] = oxidized [plastocyanin] + reduced [2Fe-2S]-[ferredoxin]. In terms of biological role, psaA and PsaB bind P700, the primary electron donor of photosystem I (PSI), as well as the electron acceptors A0, A1 and FX. PSI is a plastocyanin/cytochrome c6-ferredoxin oxidoreductase, converting photonic excitation into a charge separation, which transfers an electron from the donor P700 chlorophyll pair to the spectroscopically characterized acceptors A0, A1, FX, FA and FB in turn. Oxidized P700 is reduced on the lumenal side of the thylakoid membrane by plastocyanin or cytochrome c6. The protein is Photosystem I P700 chlorophyll a apoprotein A2 of Bigelowiella natans (Pedinomonas minutissima).